A 421-amino-acid polypeptide reads, in one-letter code: Synaptotagmin-12 (421 aa).

The Vesicular portion of the chain corresponds to 1–18 (MAVDVTEYHLSVIKSPPG). A helical transmembrane segment spans residues 19 to 39 (WEVGVYAAGALALLGIAAVSL). Residues 40-421 (WKLWTSGSFP…VSMWHPVRRN (382 aa)) lie on the Cytoplasmic side of the membrane. Ser97 carries the post-translational modification Phosphoserine; by PKA. Ser99 and Ser214 each carry phosphoserine. C2 domains lie at 152 to 272 (TLGQ…SGWL) and 283 to 416 (AVGE…SMWH).

Belongs to the synaptotagmin family. As to quaternary structure, homodimer. Can also form heterodimers. Interacts with SYT1. Post-translationally, phosphorylation of Ser-97 is required for mossy-fiber long-term potentiation. In terms of tissue distribution, expressed in the brain, specifically by neurons in the hippocampus, and in the adrenal medulla (at protein level).

Its subcellular location is the cytoplasmic vesicle. The protein localises to the secretory vesicle. It is found in the synaptic vesicle membrane. Its function is as follows. Synaptic vesicle phosphoprotein that enhances spontaneous neurotransmitter release but does not effect induced neurotransmitter release. Unlike other synaptotagmins, it does not bind Ca(2+) or phospholipids. Essential for mossy-fiber long-term potentiation in the hippocampus. The sequence is that of Synaptotagmin-12 from Mus musculus (Mouse).